The chain runs to 137 residues: SPbeta prophage-derived uncharacterized protein YoqU (137 aa).

The protein is SPbeta prophage-derived uncharacterized protein YoqU (yoqU) of Bacillus subtilis (strain 168).